The primary structure comprises 383 residues: S-adenosylmethionine synthase (383 aa).

ATP is bound at residue His15. Asp17 provides a ligand contact to Mg(2+). A K(+)-binding site is contributed by Glu43. L-methionine contacts are provided by Glu56 and Gln99. The tract at residues 99–109 (QSPDINQGVDR) is flexible loop. ATP contacts are provided by residues 164–166 (DAK), 230–231 (RF), Asp239, 245–246 (RK), Ala262, and Lys266. Asp239 is a binding site for L-methionine. An L-methionine-binding site is contributed by Lys270.

This sequence belongs to the AdoMet synthase family. Homotetramer; dimer of dimers. Requires Mg(2+) as cofactor. It depends on K(+) as a cofactor.

The protein localises to the cytoplasm. The enzyme catalyses L-methionine + ATP + H2O = S-adenosyl-L-methionine + phosphate + diphosphate. It participates in amino-acid biosynthesis; S-adenosyl-L-methionine biosynthesis; S-adenosyl-L-methionine from L-methionine: step 1/1. Its function is as follows. Catalyzes the formation of S-adenosylmethionine (AdoMet) from methionine and ATP. The overall synthetic reaction is composed of two sequential steps, AdoMet formation and the subsequent tripolyphosphate hydrolysis which occurs prior to release of AdoMet from the enzyme. The protein is S-adenosylmethionine synthase of Shewanella amazonensis (strain ATCC BAA-1098 / SB2B).